Reading from the N-terminus, the 191-residue chain is Peptide methionine sulfoxide reductase (191 aa).

Disordered stretches follow at residues 1-20 and 168-191; these read MASS…TPEN and EKGG…KCYG.

Belongs to the MsrA Met sulfoxide reductase family.

The enzyme catalyses L-methionyl-[protein] + [thioredoxin]-disulfide + H2O = L-methionyl-(S)-S-oxide-[protein] + [thioredoxin]-dithiol. It carries out the reaction [thioredoxin]-disulfide + L-methionine + H2O = L-methionine (S)-S-oxide + [thioredoxin]-dithiol. Functionally, has an important function as a repair enzyme for proteins that have been inactivated by oxidation. Catalyzes the reversible oxidation-reduction of methionine sulfoxide in proteins to methionine. The sequence is that of Peptide methionine sulfoxide reductase from Fragaria ananassa (Strawberry).